The following is a 307-amino-acid chain: Serine/threonine-protein phosphatase 4 catalytic subunit (307 aa).

Residue Ala-2 is modified to N-acetylalanine. Residues Asp-54, His-56, Asp-82, and Asn-114 each contribute to the Mn(2+) site. The Proton donor role is filled by His-115. Mn(2+)-binding residues include His-164 and His-238. Position 307 is a leucine methyl ester (Leu-307).

It belongs to the PPP phosphatase family. PP-4 (PP-X) subfamily. As to quaternary structure, serine/threonine-protein phosphatase 4 (PP4) occurs in different assemblies of the catalytic and one or more regulatory subunits. Component of the PP4 complexes PPP4C-PPP4R1, PPP4C-PPP4R2, PPP4C-PPP4R2-PPP4R3A, PPP4C-PPP4R2-PPP4R3B and PPP4C-PPP4R4. The PPP4C-PPP4R2 complex appears to be a tetramer composed of 2 molecules of PPP4C and 2 molecules of PPP4R2. Interacts with REL, NFKB1/p50 and RELA. Interacts with SMN1 and GEMIN4. Interacts with IRS4 (phosphorylated). Interacts with SMEK1/PPP4R3A; the interaction requires PP4R2. Interacts with HDAC3. Mn(2+) is required as a cofactor. In terms of processing, methylation at the C-terminal Leu-307 is critical for interactions with regulatory subunits and functions in DNA repair.

It is found in the cytoplasm. The protein localises to the nucleus. It localises to the cytoskeleton. Its subcellular location is the microtubule organizing center. The protein resides in the centrosome. It catalyses the reaction O-phospho-L-seryl-[protein] + H2O = L-seryl-[protein] + phosphate. The catalysed reaction is O-phospho-L-threonyl-[protein] + H2O = L-threonyl-[protein] + phosphate. Protein phosphatase that is involved in many processes such as microtubule organization at centrosomes, maturation of spliceosomal snRNPs, apoptosis, DNA repair, tumor necrosis factor (TNF)-alpha signaling, activation of c-Jun N-terminal kinase MAPK8, regulation of histone acetylation, DNA damage checkpoint signaling, NF-kappa-B activation and cell migration. The PPP4C-PPP4R1 PP4 complex may play a role in dephosphorylation and regulation of HDAC3. The PPP4C-PPP4R2-PPP4R3A PP4 complex specifically dephosphorylates H2AX phosphorylated on Ser-140 (gamma-H2AX) generated during DNA replication and required for DNA DSB repair. Dephosphorylates NDEL1 at CDK1 phosphorylation sites and negatively regulates CDK1 activity in interphase. In response to DNA damage, catalyzes RPA2 dephosphorylation, an essential step for DNA repair since it allows the efficient RPA2-mediated recruitment of RAD51 to chromatin. This is Serine/threonine-protein phosphatase 4 catalytic subunit (PPP4C) from Oryctolagus cuniculus (Rabbit).